Here is a 325-residue protein sequence, read N- to C-terminus: Zinc-type alcohol dehydrogenase-like protein C337.11 (325 aa).

The protein belongs to the zinc-containing alcohol dehydrogenase family. Quinone oxidoreductase subfamily.

It localises to the cytoplasm. Its subcellular location is the nucleus. The polypeptide is Zinc-type alcohol dehydrogenase-like protein C337.11 (Schizosaccharomyces pombe (strain 972 / ATCC 24843) (Fission yeast)).